A 59-amino-acid polypeptide reads, in one-letter code: Large ribosomal subunit protein bL32 (59 aa).

The interval 1–23 (MAVQQNKKSPSKRGMHRSHDFLT) is disordered.

It belongs to the bacterial ribosomal protein bL32 family.

The polypeptide is Large ribosomal subunit protein bL32 (Burkholderia multivorans (strain ATCC 17616 / 249)).